Consider the following 175-residue polypeptide: Adenine phosphoribosyltransferase (175 aa).

This sequence belongs to the purine/pyrimidine phosphoribosyltransferase family. As to quaternary structure, homodimer.

It localises to the cytoplasm. The catalysed reaction is AMP + diphosphate = 5-phospho-alpha-D-ribose 1-diphosphate + adenine. It participates in purine metabolism; AMP biosynthesis via salvage pathway; AMP from adenine: step 1/1. In terms of biological role, catalyzes a salvage reaction resulting in the formation of AMP, that is energically less costly than de novo synthesis. The polypeptide is Adenine phosphoribosyltransferase (Synechococcus sp. (strain JA-3-3Ab) (Cyanobacteria bacterium Yellowstone A-Prime)).